Consider the following 41-residue polypeptide: Perlinhibin (41 aa).

In terms of processing, contains four disulfide bonds.

Functionally, binds to calcite crystals in the shell and inhibits further shell growth at the binding site. The polypeptide is Perlinhibin (Haliotis laevigata (Smooth Australian abalone)).